The primary structure comprises 162 residues: 2-C-methyl-D-erythritol 2,4-cyclodiphosphate synthase (162 aa).

Aspartate 8 and histidine 10 together coordinate a divalent metal cation. 4-CDP-2-C-methyl-D-erythritol 2-phosphate is bound by residues aspartate 8–histidine 10 and histidine 34–serine 35. Histidine 42 is a binding site for a divalent metal cation. 4-CDP-2-C-methyl-D-erythritol 2-phosphate-binding positions include aspartate 56–glycine 58, phenylalanine 61–aspartate 65, threonine 132–glutamate 135, phenylalanine 139, and lysine 142.

This sequence belongs to the IspF family. As to quaternary structure, homotrimer. A divalent metal cation serves as cofactor.

It carries out the reaction 4-CDP-2-C-methyl-D-erythritol 2-phosphate = 2-C-methyl-D-erythritol 2,4-cyclic diphosphate + CMP. The protein operates within isoprenoid biosynthesis; isopentenyl diphosphate biosynthesis via DXP pathway; isopentenyl diphosphate from 1-deoxy-D-xylulose 5-phosphate: step 4/6. In terms of biological role, involved in the biosynthesis of isopentenyl diphosphate (IPP) and dimethylallyl diphosphate (DMAPP), two major building blocks of isoprenoid compounds. Catalyzes the conversion of 4-diphosphocytidyl-2-C-methyl-D-erythritol 2-phosphate (CDP-ME2P) to 2-C-methyl-D-erythritol 2,4-cyclodiphosphate (ME-CPP) with a corresponding release of cytidine 5-monophosphate (CMP). This is 2-C-methyl-D-erythritol 2,4-cyclodiphosphate synthase from Pelotomaculum thermopropionicum (strain DSM 13744 / JCM 10971 / SI).